A 28-amino-acid polypeptide reads, in one-letter code: Mast cell degranulating peptide (28 aa).

2 cysteine pairs are disulfide-bonded: C2–C18 and C4–C22.

Expressed by the venom gland.

It is found in the secreted. Functionally, mast cell degranulating peptide. The polypeptide is Mast cell degranulating peptide (Bombus pensylvanicus (American bumblebee)).